The following is a 569-amino-acid chain: Sulfite reductase [NADPH] hemoprotein beta-component (569 aa).

Residues Cys-434, Cys-440, Cys-479, and Cys-483 each contribute to the [4Fe-4S] cluster site. Cys-483 lines the siroheme pocket.

It belongs to the nitrite and sulfite reductase 4Fe-4S domain family. As to quaternary structure, alpha(8)-beta(8). The alpha component is a flavoprotein, the beta component is a hemoprotein. Siroheme serves as cofactor. It depends on [4Fe-4S] cluster as a cofactor.

The catalysed reaction is hydrogen sulfide + 3 NADP(+) + 3 H2O = sulfite + 3 NADPH + 4 H(+). The protein operates within sulfur metabolism; hydrogen sulfide biosynthesis; hydrogen sulfide from sulfite (NADPH route): step 1/1. Its function is as follows. Component of the sulfite reductase complex that catalyzes the 6-electron reduction of sulfite to sulfide. This is one of several activities required for the biosynthesis of L-cysteine from sulfate. The polypeptide is Sulfite reductase [NADPH] hemoprotein beta-component (Staphylococcus carnosus (strain TM300)).